The chain runs to 477 residues: Transposase for insertion sequence element IS231F (477 aa).

It belongs to the transposase 11 family.

Functionally, involved in the transposition of the insertion sequence. This is Transposase for insertion sequence element IS231F from Bacillus thuringiensis subsp. israelensis.